We begin with the raw amino-acid sequence, 91 residues long: uncharacterized protein (91 aa).

An N-terminal signal peptide occupies residues 1-21 (MKQLLASPSLQLVTYPASATA).

It belongs to the BhsA/McbA family.

It localises to the periplasm. This is an uncharacterized protein from Escherichia coli O157:H7.